Consider the following 204-residue polypeptide: Putative 3-methyladenine DNA glycosylase (204 aa).

This sequence belongs to the DNA glycosylase MPG family.

The protein is Putative 3-methyladenine DNA glycosylase of Mycobacterium sp. (strain KMS).